The chain runs to 431 residues: Metal-binding activator 1 (431 aa).

A DNA-binding region (copper-fist) is located at residues 1 to 40 (MILIDDIKYACMECVRGHRSSSCKHHERPLLQVRSKGRPG). Zn(2+)-binding residues include cysteine 11, cysteine 14, cysteine 23, and histidine 25.

It localises to the nucleus. In terms of biological role, copper ion-sensing transcription factor which activates transcription of the CTR1 copper transporter under low-copper conditions. Promotes filamentous and invasive growth. In Candida albicans (strain SC5314 / ATCC MYA-2876) (Yeast), this protein is Metal-binding activator 1 (MAC1).